The sequence spans 154 residues: Protein X (154 aa).

The disordered stretch occupies residues 28-50 (RPLPGPLGAVPPSSPSAVPADDG). The segment covering 33-48 (PLGAVPPSSPSAVPAD) has biased composition (low complexity). A mitochondrial targeting sequence region spans residues 68–117 (PCALRFTSARRMETTVNAPWSLPTVLHKRTLGLSGWSMTWIEEYIKDCVF).

It belongs to the orthohepadnavirus protein X family. As to quaternary structure, may form homodimer. May interact with host CEBPA, CFLAR, CREB1, DDB1, E4F1, HBXIP, HSPD1/HSP60, NFKBIA, POLR2E and SMAD4. Interacts with host SMC5-SMC6 complex and induces its degradation. Interacts with host TRPC4AP; leading to prevent ubiquitination of TRPC4AP. Interacts with host PLSCR1; this interaction promotes ubiquitination and degradation of HBx and impairs HBx-mediated cell proliferation. In terms of processing, a fraction may be phosphorylated in insect cells and HepG2 cells, a human hepatoblastoma cell line. Phosphorylated in vitro by host protein kinase C or mitogen-activated protein kinase. N-acetylated in insect cells.

Its subcellular location is the host cytoplasm. The protein resides in the host nucleus. It localises to the host mitochondrion. Its function is as follows. Multifunctional protein that plays a role in silencing host antiviral defenses and promoting viral transcription. Does not seem to be essential for HBV infection. May be directly involved in development of cirrhosis and liver cancer (hepatocellular carcinoma). Most of cytosolic activities involve modulation of cytosolic calcium. The effect on apoptosis is controversial depending on the cell types in which the studies have been conducted. May induce apoptosis by localizing in mitochondria and causing loss of mitochondrial membrane potential. May also modulate apoptosis by binding host CFLAR, a key regulator of the death-inducing signaling complex (DISC). Promotes viral transcription by using the host E3 ubiquitin ligase DDB1 to target the SMC5-SMC6 complex to proteasomal degradation. This host complex would otherwise bind to viral episomal DNA, and prevents its transcription. Moderately stimulates transcription of many different viral and cellular transcription elements. Promoters and enhancers stimulated by HBx contain DNA binding sites for NF-kappa-B, AP-1, AP-2, c-EBP, ATF/CREB, or the calcium-activated factor NF-AT. The chain is Protein X from Homo sapiens (Human).